Reading from the N-terminus, the 62-residue chain is Photosystem II reaction center protein Z (62 aa).

Helical transmembrane passes span 8–28 and 41–61; these read AVFA…VVLA and FSGA…NSFI.

The protein belongs to the PsbZ family. As to quaternary structure, PSII is composed of 1 copy each of membrane proteins PsbA, PsbB, PsbC, PsbD, PsbE, PsbF, PsbH, PsbI, PsbJ, PsbK, PsbL, PsbM, PsbT, PsbY, PsbZ, Psb30/Ycf12, at least 3 peripheral proteins of the oxygen-evolving complex and a large number of cofactors. It forms dimeric complexes.

The protein localises to the plastid. It localises to the chloroplast thylakoid membrane. Its function is as follows. May control the interaction of photosystem II (PSII) cores with the light-harvesting antenna, regulates electron flow through the 2 photosystem reaction centers. PSII is a light-driven water plastoquinone oxidoreductase, using light energy to abstract electrons from H(2)O, generating a proton gradient subsequently used for ATP formation. The protein is Photosystem II reaction center protein Z of Anthoceros angustus (Hornwort).